Consider the following 490-residue polypeptide: Homoserine O-acetyltransferase (490 aa).

In terms of domain architecture, AB hydrolase-1 spans 47-353; the sequence is NAILVCHALT…SQFGHDAFLI (307 aa). Residue Ser152 is the Nucleophile of the active site. Arg221 serves as a coordination point for substrate. Active-site residues include Asp315 and His348. Asp349 provides a ligand contact to substrate. CBS domains are found at residues 375-432 and 436-490; these read MNTQ…YTSL and MSSQ…GRGP.

It belongs to the AB hydrolase superfamily. MetX family. As to quaternary structure, homodimer.

It is found in the cytoplasm. The enzyme catalyses L-homoserine + acetyl-CoA = O-acetyl-L-homoserine + CoA. The protein operates within amino-acid biosynthesis; L-methionine biosynthesis via de novo pathway; O-acetyl-L-homoserine from L-homoserine: step 1/1. Transfers an acetyl group from acetyl-CoA to L-homoserine, forming acetyl-L-homoserine. The protein is Homoserine O-acetyltransferase of Methanosphaerula palustris (strain ATCC BAA-1556 / DSM 19958 / E1-9c).